Here is a 103-residue protein sequence, read N- to C-terminus: Matrix Gla protein (103 aa).

The N-terminal stretch at 1–19 (MKSLLLLSVLAALAVAALC) is a signal peptide. Glu21 is modified (4-carboxyglutamate). Phosphoserine is present on residues Ser22, Ser25, and Ser28. A Gla domain is found at 51–97 (RAKAQERIRELNKPPYELNREACDDYKLCERYAMVYGYNAAYNRYFR). 4-carboxyglutamate is present on residues Glu56, Glu60, Glu67, and Glu71. Cysteines 73 and 79 form a disulfide.

It belongs to the osteocalcin/matrix Gla protein family. In terms of processing, requires vitamin K-dependent gamma-carboxylation for its function.

Its subcellular location is the secreted. Functionally, associates with the organic matrix of bone and cartilage. Thought to act as an inhibitor of bone formation. The polypeptide is Matrix Gla protein (MGP) (Sus scrofa (Pig)).